The primary structure comprises 144 residues: Large ribosomal subunit protein uL16m (144 aa).

The protein belongs to the universal ribosomal protein uL16 family.

It localises to the mitochondrion. This Dictyostelium discoideum (Social amoeba) protein is Large ribosomal subunit protein uL16m (mrpl16).